Reading from the N-terminus, the 435-residue chain is Amino acid transporter AVT6C (435 aa).

The interval 1-24 (MTPQIKTHLLPKQEPSSSENHGSS) is disordered. Transmembrane regions (helical) follow at residues 28–48 (IVFN…PAAF), 53–73 (IVPA…SVGF), 100–120 (IAVQ…FSII), 148–168 (WNTR…PLVL), 181–201 (VSFL…ISAL), 219–239 (GSFW…TFHF), 260–280 (ISVI…YLLF), 307–327 (IVRL…NFSL), 354–374 (LALL…WYFF), 375–395 (QFMG…AIVL), and 408–428 (IVAA…ISTN).

Belongs to the amino acid/polyamine transporter 2 family. Amino acid/auxin permease (AAAP) (TC 2.A.18.6) subfamily.

The protein resides in the membrane. The protein is Amino acid transporter AVT6C of Arabidopsis thaliana (Mouse-ear cress).